The primary structure comprises 290 residues: Dual-specificity RNA pseudouridine synthase RluF (290 aa).

The S4 RNA-binding domain occupies 7–72; it reads VRLNKYISES…EAEDLVLIAL (66 aa). Interaction with RNA regions lie at residues 105 to 108 and 187 to 190; these read RLDK and RQIR. The active-site Nucleophile is Asp-107. The disordered stretch occupies residues 241 to 290; the sequence is SEAKPKAKAKPKTAGIKRPVVKMEKTAEKGGRPASNGKRFTSPGRKKKGR. Residues 261-271 are compositionally biased toward basic and acidic residues; that stretch reads VKMEKTAEKGG.

This sequence belongs to the pseudouridine synthase RsuA family. As to quaternary structure, monomer.

The enzyme catalyses uridine(2604) in 23S rRNA = pseudouridine(2604) in 23S rRNA. It catalyses the reaction uridine(35) in tRNA(Tyr) = pseudouridine(35) in tRNA(Tyr). Dual specificity enzyme that catalyzes the synthesis of pseudouridine from uracil-2604 in 23S ribosomal RNA and from uracil-35 in the anticodon of tRNA(Tyr). In Shigella flexneri, this protein is Dual-specificity RNA pseudouridine synthase RluF (rluF).